A 384-amino-acid chain; its full sequence is Glutamate 5-kinase (384 aa).

Lys24 serves as a coordination point for ATP. Positions 64, 149, and 161 each coordinate substrate. ATP-binding positions include 181-182 (TD) and 223-229 (TGGMRTK). Positions 288-370 (PGAILIDAGA…RDIQTLLGYT (83 aa)) constitute a PUA domain.

Belongs to the glutamate 5-kinase family.

The protein resides in the cytoplasm. It carries out the reaction L-glutamate + ATP = L-glutamyl 5-phosphate + ADP. The protein operates within amino-acid biosynthesis; L-proline biosynthesis; L-glutamate 5-semialdehyde from L-glutamate: step 1/2. In terms of biological role, catalyzes the transfer of a phosphate group to glutamate to form L-glutamate 5-phosphate. The protein is Glutamate 5-kinase of Xylella fastidiosa (strain M23).